The following is a 218-amino-acid chain: ER lumen protein-retaining receptor (218 aa).

Residues 1 to 2 (MN) lie on the Lumenal side of the membrane. The chain crosses the membrane as a helical span at residues 3-23 (LFSFLGDMLHLGSMLILLFKI). Residues 24 to 57 (KNDKSCAGVSLKSQILFTIVFTARYLDLFTNYVS) lie on the Cytoplasmic side of the membrane. The helical transmembrane segment at 58 to 78 (LYITFMKITYIAVSYYTLHLI) threads the bilayer. Over 79-94 (ARKYKFTYDKDHDTFK) the chain is Lumenal. The chain crosses the membrane as a helical span at residues 95–115 (IVYLIASCAILSLITYDKTTI). Residues 116-123 (GIYSTFLE) lie on the Cytoplasmic side of the membrane. Residues 124-144 (ILWTFSIYLESIAILPQLILL) traverse the membrane as a helical segment. Topologically, residues 145-152 (QRTGEVEA) are lumenal. A helical membrane pass occupies residues 153–173 (LTSNYIVLLGGYRAFYLFNWI). Topologically, residues 174–184 (YRITFYNWSGK) are cytoplasmic. The helical transmembrane segment at 185–205 (IEMLSGLLQTILYADFFYYYA) threads the bilayer. Over 206-218 (KSRMYGKKLVLPQ) the chain is Lumenal.

The protein belongs to the ERD2 family.

Its subcellular location is the endoplasmic reticulum membrane. Required for the retention of luminal endoplasmic reticulum proteins. Determines the specificity of the luminal ER protein retention system. Also required for normal vesicular traffic through the Golgi. This Dictyostelium discoideum (Social amoeba) protein is ER lumen protein-retaining receptor (kdelr).